The primary structure comprises 129 residues: L-ectoine synthase (129 aa).

Belongs to the ectoine synthase family.

It catalyses the reaction (2S)-4-acetamido-2-aminobutanoate = L-ectoine + H2O. Its pathway is amine and polyamine biosynthesis; ectoine biosynthesis; L-ectoine from L-aspartate 4-semialdehyde: step 3/3. Its function is as follows. Catalyzes the circularization of gamma-N-acetyl-alpha,gamma-diaminobutyric acid (ADABA) to ectoine (1,4,5,6-tetrahydro-2-methyl-4-pyrimidine carboxylic acid), which is an excellent osmoprotectant. The polypeptide is L-ectoine synthase (Marinomonas sp. (strain MWYL1)).